A 99-amino-acid chain; its full sequence is Transcriptional regulator WhiB2 (99 aa).

Positions leucine 33–arginine 90 constitute a 4Fe-4S Wbl-type domain. Residues cysteine 34, cysteine 57, cysteine 60, and cysteine 66 each coordinate [4Fe-4S] cluster.

Belongs to the WhiB family. [4Fe-4S] cluster serves as cofactor. In terms of processing, the Fe-S cluster can be nitrosylated by nitric oxide (NO). Post-translationally, upon Fe-S cluster removal intramolecular disulfide bonds are formed.

Its subcellular location is the cytoplasm. Its function is as follows. Acts as a transcriptional regulator. Probably redox-responsive. The apo- but not holo-form probably binds DNA. The polypeptide is Transcriptional regulator WhiB2 (whiB2) (Bifidobacterium longum (strain NCC 2705)).